The primary structure comprises 185 residues: Ribosome-recycling factor (185 aa).

Residues 145-164 (DGEAGEDEVSRAEKDLDKTT) are disordered.

Belongs to the RRF family.

It localises to the cytoplasm. Functionally, responsible for the release of ribosomes from messenger RNA at the termination of protein biosynthesis. May increase the efficiency of translation by recycling ribosomes from one round of translation to another. This Mycobacterium sp. (strain JLS) protein is Ribosome-recycling factor.